The primary structure comprises 363 residues: Spermidine/putrescine import ATP-binding protein PotA (363 aa).

Positions 6–236 constitute an ABC transporter domain; that stretch reads LEIRNVTRRF…PRSRFVADFI (231 aa). 38-45 provides a ligand contact to ATP; that stretch reads GPSGCGKT.

This sequence belongs to the ABC transporter superfamily. Spermidine/putrescine importer (TC 3.A.1.11.1) family. The complex is composed of two ATP-binding proteins (PotA), two transmembrane proteins (PotB and PotC) and a solute-binding protein (PotD).

It localises to the cell inner membrane. It carries out the reaction ATP + H2O + polyamine-[polyamine-binding protein]Side 1 = ADP + phosphate + polyamineSide 2 + [polyamine-binding protein]Side 1.. Its function is as follows. Part of the ABC transporter complex PotABCD involved in spermidine/putrescine import. Responsible for energy coupling to the transport system. This Pseudomonas aeruginosa (strain UCBPP-PA14) protein is Spermidine/putrescine import ATP-binding protein PotA.